The following is a 351-amino-acid chain: Purine permease 3 (351 aa).

10 consecutive transmembrane segments (helical) span residues 4–24 (ALVI…PLIM), 35–55 (IWFS…PLLF), 72–92 (FFLI…LSGF), 108–128 (TAAL…FFMV), 132–152 (FTPF…VLGM), 168–188 (ITGF…LPLV), 207–227 (FQLI…FIAG), 249–269 (VAVF…GLIF), 274–294 (LVSG…AVIF), and 304–324 (GLSL…EIKS). Positions 45–152 (GFPVIFIPLL…LTVGAAVLGM (108 aa)) constitute an EamA domain. A disordered region spans residues 329 to 351 (RRIQQEESQETEQSSLSRPISEC).

It belongs to the purine permeases (TC 2.A.7.14) family. Restricted to pollen.

The protein resides in the membrane. Its function is as follows. May be involved in transport of purine derivatives during pollen germination and tube elongation. In Arabidopsis thaliana (Mouse-ear cress), this protein is Purine permease 3 (PUP3).